Reading from the N-terminus, the 223-residue chain is Serum amyloid P-component (223 aa).

Residues 1-19 (MDKMLFWVSVFTIFLDVFA) form the signal peptide. Positions 24–223 (DKKVFVFPRE…YVIIKPRVWD (200 aa)) constitute a Pentraxin (PTX) domain. The cysteines at positions 55 and 114 are disulfide-linked. The Ca(2+) site is built by Asp-77, Asn-78, Glu-155, Gln-156, Asp-157, and Gln-167. A glycan (N-linked (GlcNAc...) asparagine) is linked at Asn-198.

The protein belongs to the pentraxin family. In terms of assembly, homopentamer. Pentraxin (or pentaxin) have a discoid arrangement of 5 non-covalently bound subunits. Ca(2+) serves as cofactor.

The protein localises to the secreted. The chain is Serum amyloid P-component (PTX2) from Cavia porcellus (Guinea pig).